The sequence spans 209 residues: Uracil phosphoribosyltransferase (209 aa).

5-phospho-alpha-D-ribose 1-diphosphate contacts are provided by residues Arg79, Arg104, and 131–139; that span reads DPMLATGGS. Uracil contacts are provided by residues Ile194 and 199-201; that span reads GDA. Residue Asp200 participates in 5-phospho-alpha-D-ribose 1-diphosphate binding.

It belongs to the UPRTase family. The cofactor is Mg(2+).

The enzyme catalyses UMP + diphosphate = 5-phospho-alpha-D-ribose 1-diphosphate + uracil. The protein operates within pyrimidine metabolism; UMP biosynthesis via salvage pathway; UMP from uracil: step 1/1. With respect to regulation, allosterically activated by GTP. Catalyzes the conversion of uracil and 5-phospho-alpha-D-ribose 1-diphosphate (PRPP) to UMP and diphosphate. The chain is Uracil phosphoribosyltransferase from Bacillus pumilus (strain SAFR-032).